Consider the following 70-residue polypeptide: Peptide BmKn1 (70 aa).

A signal peptide spans 1 to 23 (MKSQTFFLLFLVVLLLAISQSEA). At Phe36 the chain carries Phenylalanine amide. The propeptide occupies 40 to 70 (SMRDMDTMKYLYDPSLSAADLKTLQKLMENY).

Belongs to the non-disulfide-bridged peptide (NDBP) superfamily. Short antimicrobial peptide (group 4) family. Expressed by the venom gland.

Its subcellular location is the secreted. It is found in the target cell membrane. Antibacterial peptide. The chain is Peptide BmKn1 from Olivierus martensii (Manchurian scorpion).